We begin with the raw amino-acid sequence, 298 residues long: ATP synthase gamma chain (298 aa).

The protein belongs to the ATPase gamma chain family. In terms of assembly, F-type ATPases have 2 components, CF(1) - the catalytic core - and CF(0) - the membrane proton channel. CF(1) has five subunits: alpha(3), beta(3), gamma(1), delta(1), epsilon(1). CF(0) has three main subunits: a, b and c.

It is found in the cell inner membrane. Produces ATP from ADP in the presence of a proton gradient across the membrane. The gamma chain is believed to be important in regulating ATPase activity and the flow of protons through the CF(0) complex. This chain is ATP synthase gamma chain, found in Granulibacter bethesdensis (strain ATCC BAA-1260 / CGDNIH1).